We begin with the raw amino-acid sequence, 265 residues long: Bidirectional sugar transporter NEC1 (265 aa).

The Extracellular portion of the chain corresponds to 1 to 8 (MAQLRADD). The helical transmembrane segment at 9-29 (LSFIFGLLGNIVSFMVFLAPV) threads the bilayer. One can recognise a MtN3/slv 1 domain in the interval 11-97 (FIFGLLGNIV…SLFLFYAPRK (87 aa)). The Cytoplasmic segment spans residues 30–44 (PTFYKIYKRKSSEGY). The chain crosses the membrane as a helical span at residues 45-65 (QAIPYMVALFSAGLLLYYAYL). Topologically, residues 66-71 (RKNAYL) are extracellular. A helical transmembrane segment spans residues 72 to 92 (IVSINGFGCAIELTYISLFLF). The Cytoplasmic portion of the chain corresponds to 93 to 103 (YAPRKSKIFTG). Residues 104-124 (WLMLLELGALGMVMPITYLLA) traverse the membrane as a helical segment. Topologically, residues 125–130 (EGSHRV) are extracellular. Residues 131–151 (MIVGWICAAINVAVFAAPLSI) form a helical membrane-spanning segment. A MtN3/slv 2 domain is found at 132–216 (IVGWICAAIN…LLYFVYKDSK (85 aa)). Topologically, residues 152 to 164 (MRQVIKTKSVEFM) are cytoplasmic. The helical transmembrane segment at 165-185 (PFTLSLFLTLCATMWFFYGFF) threads the bilayer. The Extracellular segment spans residues 186 to 190 (KKDFY). Residues 191–211 (IAFPNILGFLFGIVQMLLYFV) form a helical membrane-spanning segment. Residues 212–265 (YKDSKRIDDEKSDPVREATKSKEGVEIIINIEDDNSDNALQSMEKDFSRLRTSK) lie on the Cytoplasmic side of the membrane.

It belongs to the SWEET sugar transporter family. Forms homooligomers and/or heterooligomers. In terms of tissue distribution, highly expressed in nectary tissue and weakly in the stamen, especially in stomium cells and in the upper part of the filaments.

The protein resides in the cell membrane. Functionally, mediates both low-affinity uptake and efflux of sugar across the plasma membrane. Promotes the formation of phloem bundles in mid-veins. Probably involved in the development of stomium cells that control anther opening time. Required for pollen viability. In Petunia hybrida (Petunia), this protein is Bidirectional sugar transporter NEC1 (NEC1).